Consider the following 69-residue polypeptide: DNA gyrase inhibitor YacG (69 aa).

Zn(2+) contacts are provided by C13, C16, C32, and C36.

It belongs to the DNA gyrase inhibitor YacG family. In terms of assembly, interacts with GyrB. Requires Zn(2+) as cofactor.

Its function is as follows. Inhibits all the catalytic activities of DNA gyrase by preventing its interaction with DNA. Acts by binding directly to the C-terminal domain of GyrB, which probably disrupts DNA binding by the gyrase. This Neisseria gonorrhoeae (strain ATCC 700825 / FA 1090) protein is DNA gyrase inhibitor YacG.